A 100-amino-acid polypeptide reads, in one-letter code: Large ribosomal subunit protein uL23 (100 aa).

It belongs to the universal ribosomal protein uL23 family. In terms of assembly, part of the 50S ribosomal subunit. Contacts protein L29, and trigger factor when it is bound to the ribosome.

In terms of biological role, one of the early assembly proteins it binds 23S rRNA. One of the proteins that surrounds the polypeptide exit tunnel on the outside of the ribosome. Forms the main docking site for trigger factor binding to the ribosome. The protein is Large ribosomal subunit protein uL23 of Mycolicibacterium gilvum (strain PYR-GCK) (Mycobacterium gilvum (strain PYR-GCK)).